An 873-amino-acid polypeptide reads, in one-letter code: Leucine--tRNA ligase (873 aa).

Residues 48–58 (PYPSGKLHMGH) carry the 'HIGH' region motif. The 'KMSKS' region motif lies at 636-640 (KMSKS). Lys639 is a binding site for ATP.

Belongs to the class-I aminoacyl-tRNA synthetase family.

It localises to the cytoplasm. It carries out the reaction tRNA(Leu) + L-leucine + ATP = L-leucyl-tRNA(Leu) + AMP + diphosphate. The sequence is that of Leucine--tRNA ligase from Cupriavidus metallidurans (strain ATCC 43123 / DSM 2839 / NBRC 102507 / CH34) (Ralstonia metallidurans).